Consider the following 492-residue polypeptide: UDP-N-acetylmuramoyl-L-alanyl-D-glutamate--2,6-diaminopimelate ligase (492 aa).

Serine 30 serves as a coordination point for UDP-N-acetyl-alpha-D-muramoyl-L-alanyl-D-glutamate. 114 to 120 (GTNGKTS) is a binding site for ATP. Residues 156 to 157 (TT), serine 183, glutamine 189, and arginine 191 contribute to the UDP-N-acetyl-alpha-D-muramoyl-L-alanyl-D-glutamate site. Lysine 223 carries the post-translational modification N6-carboxylysine. Residues arginine 389, 413-416 (DNPR), glycine 462, and glutamate 466 each bind meso-2,6-diaminopimelate. Positions 413 to 416 (DNPR) match the Meso-diaminopimelate recognition motif motif.

This sequence belongs to the MurCDEF family. MurE subfamily. Requires Mg(2+) as cofactor. In terms of processing, carboxylation is probably crucial for Mg(2+) binding and, consequently, for the gamma-phosphate positioning of ATP.

It is found in the cytoplasm. The catalysed reaction is UDP-N-acetyl-alpha-D-muramoyl-L-alanyl-D-glutamate + meso-2,6-diaminopimelate + ATP = UDP-N-acetyl-alpha-D-muramoyl-L-alanyl-gamma-D-glutamyl-meso-2,6-diaminopimelate + ADP + phosphate + H(+). It participates in cell wall biogenesis; peptidoglycan biosynthesis. Functionally, catalyzes the addition of meso-diaminopimelic acid to the nucleotide precursor UDP-N-acetylmuramoyl-L-alanyl-D-glutamate (UMAG) in the biosynthesis of bacterial cell-wall peptidoglycan. This chain is UDP-N-acetylmuramoyl-L-alanyl-D-glutamate--2,6-diaminopimelate ligase, found in Neisseria meningitidis serogroup A / serotype 4A (strain DSM 15465 / Z2491).